A 127-amino-acid polypeptide reads, in one-letter code: Apolipoprotein C-IV (127 aa).

A signal peptide spans M1–C27. Residue N63 is glycosylated (N-linked (GlcNAc...) asparagine).

The protein belongs to the apolipoprotein C4 family.

The protein localises to the secreted. Functionally, may participate in lipoprotein metabolism. The sequence is that of Apolipoprotein C-IV (APOC4) from Colobus guereza (Mantled guereza).